Here is a 488-residue protein sequence, read N- to C-terminus: Stress activated transcription factor atfs-1 (488 aa).

The N-terminal 23 residues, 1–23 (MFSRVGRLTTFGAQAVSNCPFRR), are a transit peptide targeting the mitochondrion. The tract at residues 138–191 (SWQNGSSVGHPHGHQQQQQTCQQPPTHSSTTETMHDFSNFGDNMGSPLFQSPSK) is disordered. A compositionally biased stretch (low complexity) spans 142–168 (GSSVGHPHGHQQQQQTCQQPPTHSSTT). Lys342 participates in a covalent cross-link: Glycyl lysine isopeptide (Lys-Gly) (interchain with G-Cter in smo-1). The disordered stretch occupies residues 353 to 400 (QRDDDDEDYIPASEARRTSSRLNRKSATPTYLRRRDSERSWTPASDDY). Residues 420–483 (DEETDRRRML…NSMKKELRKM (64 aa)) form the bZIP domain. The interval 425-460 (RRRMLNRIAAVRYREKKRAEKKGRKMEFQEVADRNR) is basic motif. The Nuclear localization signal signature appears at 436-441 (RYREKK). Positions 462 to 469 (LLQKERQL) are leucine-zipper.

Belongs to the bZIP family. Post-translationally, may be desumoylated by ulp-4. As to expression, ubiquitously expressed.

It is found in the mitochondrion matrix. It localises to the cytoplasm. Its subcellular location is the nucleus. Its function is as follows. Acts as a transcription factor during mitochondrial stress by activating the mitochondrial unfolded protein response (mtUPR). Induces nuclear and mitochondrial gene transcription, including genes coding for mitochondrial chaperones and proteins involved in glycolysis, amino acid catabolism and innate immunity. Following mitochondrial stress, restores mitochondrial respiratory capacity by limiting the transcription of oxidative phosphorylation (OXPHOS) machinery genes and by promoting the assembly of OXPHOS complexes via the up-regulation of chaperone and assembly factor genes. Component of a feedback loop involving atfs-1, atgl-1 and hlh-11. Acts together with flp-7 to negatively regulate the expression of the transcription regulator hlh-11, to promote expression of atgl-1, and thus atgl-1-dependent fat oxidation in response to mitochondrial stress. In addition, functions with hlh-11 to maintain lifespan. Promotes mtDNA maintenance and propagation of deleterious mtDNA. The protein is Stress activated transcription factor atfs-1 of Caenorhabditis elegans.